We begin with the raw amino-acid sequence, 401 residues long: Argininosuccinate synthase (401 aa).

ATP contacts are provided by residues 9–17 (AFSGGLDTS) and Ala35. Residues Tyr88 and Ser93 each contribute to the L-citrulline site. Gly117 contacts ATP. The L-aspartate site is built by Thr119, Asn123, and Asp124. Asn123 lines the L-citrulline pocket. L-citrulline-binding residues include Arg127 and Tyr273.

Belongs to the argininosuccinate synthase family. Type 1 subfamily. As to quaternary structure, homotetramer.

It is found in the cytoplasm. It catalyses the reaction L-citrulline + L-aspartate + ATP = 2-(N(omega)-L-arginino)succinate + AMP + diphosphate + H(+). The protein operates within amino-acid biosynthesis; L-arginine biosynthesis; L-arginine from L-ornithine and carbamoyl phosphate: step 2/3. The polypeptide is Argininosuccinate synthase (Xylella fastidiosa (strain Temecula1 / ATCC 700964)).